The primary structure comprises 196 residues: Molybdenum cofactor guanylyltransferase (196 aa).

Residues 10–12 (LAG), K23, N51, D69, and D99 contribute to the GTP site. D99 lines the Mg(2+) pocket.

Belongs to the MobA family. In terms of assembly, monomer. The cofactor is Mg(2+).

Its subcellular location is the cytoplasm. The catalysed reaction is Mo-molybdopterin + GTP + H(+) = Mo-molybdopterin guanine dinucleotide + diphosphate. In terms of biological role, transfers a GMP moiety from GTP to Mo-molybdopterin (Mo-MPT) cofactor (Moco or molybdenum cofactor) to form Mo-molybdopterin guanine dinucleotide (Mo-MGD) cofactor. The protein is Molybdenum cofactor guanylyltransferase of Shewanella baltica (strain OS155 / ATCC BAA-1091).